Consider the following 1076-residue polypeptide: Nickel and cobalt resistance protein CnrA (1076 aa).

A run of 12 helical transmembrane segments spans residues 14 to 34 (WLVL…LNLL), 366 to 386 (TVAK…FALL), 390 to 410 (RAAT…AIGM), 418 to 438 (NLMS…VIIV), 475 to 495 (PTVY…TFQG), 502 to 522 (SPMV…SLTF), 561 to 581 (PMPF…AFTF), 903 to 923 (RLAI…YMAI), 928 to 948 (LTAT…FALL), 959 to 979 (AVGF…LISA), 1003 to 1023 (RPVL…AIAT), and 1035 to 1055 (TVVI…LPAL).

This sequence belongs to the resistance-nodulation-cell division (RND) (TC 2.A.6) family.

Its subcellular location is the cell inner membrane. In terms of biological role, the products of the genes cnrA, cnrB, and cnrC are likely to form a membrane-bound protein complex catalyzing an energy-dependent efflux of Ni(2+) and Co(2+). The mechanism of action of the CnrCBA complex may be that of a proton/cation antiporter. In Cupriavidus metallidurans (strain ATCC 43123 / DSM 2839 / NBRC 102507 / CH34) (Ralstonia metallidurans), this protein is Nickel and cobalt resistance protein CnrA (cnrA).